The primary structure comprises 297 residues: Nucleotide-binding protein Bsph_0448 (297 aa).

19 to 26 lines the ATP pocket; that stretch reads GMSGAGKT. 70-73 contributes to the GTP binding site; sequence DMRG.

The protein belongs to the RapZ-like family.

Its function is as follows. Displays ATPase and GTPase activities. This chain is Nucleotide-binding protein Bsph_0448, found in Lysinibacillus sphaericus (strain C3-41).